The following is a 501-amino-acid chain: Lysine--tRNA ligase (501 aa).

Positions 404 and 411 each coordinate Mg(2+).

Belongs to the class-II aminoacyl-tRNA synthetase family. Homodimer. Mg(2+) is required as a cofactor.

It is found in the cytoplasm. It carries out the reaction tRNA(Lys) + L-lysine + ATP = L-lysyl-tRNA(Lys) + AMP + diphosphate. The polypeptide is Lysine--tRNA ligase (Campylobacter jejuni subsp. doylei (strain ATCC BAA-1458 / RM4099 / 269.97)).